The primary structure comprises 695 residues: Calcium-binding acidic-repeat protein (695 aa).

The segment at residues 1-20 (MSHLWCWLFLVLCLACLVLS) is a signal peptide (or 23). 6 TSP type-3 repeats span residues 24–38 (KDSD…DEIN), 47–56 (ADSDQDGLTD), 70–82 (KDTD…DGVE), 184–196 (GDSD…DGAE), 202–214 (KDSD…DEEE), and 248–260 (GDSD…DGAE). Positions 45-695 (YNADSDQDGL…TDPWRSDHSV (651 aa)) are disordered. Residues 59 to 70 (EVNRHQTHPQDK) are compositionally biased toward basic and acidic residues. Acidic residues-rich tracts occupy residues 271–283 (ADSD…DGEE), 291–306 (PEDP…DGDE), and 313–324 (DPEEDDSDEDGV). TSP type-3 repeat units follow at residues 294–308 (PDSD…DEVN), 317–329 (DDSD…DGAE), 340–352 (EDSD…DGAE), 363–375 (EDSD…DGAE), 379–393 (TDSD…DEVA), 402–414 (ADSD…DGAE), 425–437 (KDTD…DGVE), 470–482 (EDTD…DGAE), 493–505 (ADTD…DGAE), 516–528 (ADSD…DGAE), 539–551 (GDSD…DAAE), 555–569 (KDSD…DEVR), 600–609 (RDTDGDGVAD), 623–635 (ADTD…DGAE), and 646–658 (ADSD…DGAE). Composition is skewed to acidic residues over residues 361 to 370 (NDEDSDDDGI) and 381 to 392 (SDGDGLPDEDEV). 2 stretches are compositionally biased toward acidic residues: residues 467-477 (PNDEDTDDDGL) and 491-500 (EDADTDDDGL). A compositionally biased stretch (acidic residues) spans 537–546 (NDGDSDDDGV). Basic and acidic residues predominate over residues 589-603 (EILKHKTDPRNRDTD). Positions 665–679 (NAKDGDSDDDGKADG) are enriched in basic and acidic residues.

It localises to the secreted. The protein resides in the endoplasmic reticulum. Functionally, may function as a calcium-binding protein. The sequence is that of Calcium-binding acidic-repeat protein from Euglena gracilis.